The following is a 397-amino-acid chain: MNFNKKTIEDVQVKGKKVLVRCDFNVPLKDGVITDENRLNGAMPTIKYLVDNGAKVILCSHMGKPKGEAKPEFSLAPVAKRLSEMLGKEVVFAADDNVVGENAKKAVAEMKDGDVVLLQNTRYRKEETKNGEELSKELASLAEMFVNDAFGTAHRAHCSTVGVTEYLKPAVCGYLIQKELKFLGDAVETPERPFVAILGGAKVSDKINVINNLLEKVDTLIIGGGMAYTFLKAQGYTVGSSLVEEDKVEYAKEMLAKAEEKGVKLLLPVDHRVAKEFKDVEAVVTEDQNIAEGFMGLDIGPKTEAIYAEAIKDAKTVIWNGPMGVFEFENFNKGTIAVAKAMAEADATTIIGGGDSAAAVNILGFGDKMSHISTGGGASLEFLEGKVLPGIAALNDK.

Substrate is bound by residues 23 to 25 (DFN), R38, 61 to 64 (HMGK), R122, and R155. ATP contacts are provided by residues K206, G296, E327, and 353-356 (GGDS).

The protein belongs to the phosphoglycerate kinase family. As to quaternary structure, monomer.

The protein resides in the cytoplasm. The catalysed reaction is (2R)-3-phosphoglycerate + ATP = (2R)-3-phospho-glyceroyl phosphate + ADP. It participates in carbohydrate degradation; glycolysis; pyruvate from D-glyceraldehyde 3-phosphate: step 2/5. In Clostridium perfringens (strain ATCC 13124 / DSM 756 / JCM 1290 / NCIMB 6125 / NCTC 8237 / Type A), this protein is Phosphoglycerate kinase.